Reading from the N-terminus, the 263-residue chain is Endonuclease 8 (263 aa).

The active-site Schiff-base intermediate with DNA is the Pro2. The active-site Proton donor is the Glu3. The active-site Proton donor; for beta-elimination activity is the Lys53. DNA-binding residues include Gln70, Arg125, and Asn169. The segment at Lys229–His263 adopts an FPG-type zinc-finger fold. Catalysis depends on Arg253, which acts as the Proton donor; for delta-elimination activity.

The protein belongs to the FPG family. It depends on Zn(2+) as a cofactor.

The catalysed reaction is 2'-deoxyribonucleotide-(2'-deoxyribose 5'-phosphate)-2'-deoxyribonucleotide-DNA = a 3'-end 2'-deoxyribonucleotide-(2,3-dehydro-2,3-deoxyribose 5'-phosphate)-DNA + a 5'-end 5'-phospho-2'-deoxyribonucleoside-DNA + H(+). In terms of biological role, involved in base excision repair of DNA damaged by oxidation or by mutagenic agents. Acts as a DNA glycosylase that recognizes and removes damaged bases. Has a preference for oxidized pyrimidines, such as thymine glycol, 5,6-dihydrouracil and 5,6-dihydrothymine. Has AP (apurinic/apyrimidinic) lyase activity and introduces nicks in the DNA strand. Cleaves the DNA backbone by beta-delta elimination to generate a single-strand break at the site of the removed base with both 3'- and 5'-phosphates. The chain is Endonuclease 8 from Escherichia coli O9:H4 (strain HS).